The sequence spans 239 residues: Ribonuclease HII (239 aa).

Residues 30–221 enclose the RNase H type-2 domain; sequence GPVAGVDEVG…VRRLVTAGTP (192 aa). 3 residues coordinate a divalent metal cation: Asp36, Glu37, and Asp130.

This sequence belongs to the RNase HII family. It depends on Mn(2+) as a cofactor. Requires Mg(2+) as cofactor.

It is found in the cytoplasm. The enzyme catalyses Endonucleolytic cleavage to 5'-phosphomonoester.. In terms of biological role, endonuclease that specifically degrades the RNA of RNA-DNA hybrids. In Mycobacterium sp. (strain KMS), this protein is Ribonuclease HII.